The chain runs to 231 residues: Lipoprotein-releasing system ATP-binding protein LolD (231 aa).

The ABC transporter domain occupies leucine 11 to phenylalanine 231. Residue alanine 47–serine 54 coordinates ATP.

It belongs to the ABC transporter superfamily. Lipoprotein translocase (TC 3.A.1.125) family. In terms of assembly, the complex is composed of two ATP-binding proteins (LolD) and two transmembrane proteins (LolC and LolE).

It is found in the cell inner membrane. Its function is as follows. Part of the ABC transporter complex LolCDE involved in the translocation of mature outer membrane-directed lipoproteins, from the inner membrane to the periplasmic chaperone, LolA. Responsible for the formation of the LolA-lipoprotein complex in an ATP-dependent manner. This is Lipoprotein-releasing system ATP-binding protein LolD from Gluconobacter oxydans (strain 621H) (Gluconobacter suboxydans).